A 187-amino-acid chain; its full sequence is Nicotinamide-nucleotide adenylyltransferase (187 aa).

The protein belongs to the archaeal NMN adenylyltransferase family.

The protein localises to the cytoplasm. It catalyses the reaction beta-nicotinamide D-ribonucleotide + ATP + H(+) = diphosphate + NAD(+). It participates in cofactor biosynthesis; NAD(+) biosynthesis; NAD(+) from nicotinamide D-ribonucleotide: step 1/1. The protein is Nicotinamide-nucleotide adenylyltransferase of Thermococcus onnurineus (strain NA1).